A 751-amino-acid polypeptide reads, in one-letter code: Catalase-peroxidase (751 aa).

The signal sequence occupies residues 1 to 12; sequence MSNETKCPFSHA. The segment at residues 91-241 is a cross-link (tryptophyl-tyrosyl-methioninium (Trp-Tyr) (with M-267)); it reads WHSAGTYRIG…LAAVQMGLIY (151 aa). H92 functions as the Proton acceptor in the catalytic mechanism. Residues 241–267 constitute a cross-link (tryptophyl-tyrosyl-methioninium (Tyr-Met) (with W-91)); sequence YVNPEGPDGNPDPLAAAHDIRESFGRM. Residue H282 participates in heme b binding.

Belongs to the peroxidase family. Peroxidase/catalase subfamily. In terms of assembly, homodimer or homotetramer. Requires heme b as cofactor. In terms of processing, formation of the three residue Trp-Tyr-Met cross-link is important for the catalase, but not the peroxidase activity of the enzyme.

It catalyses the reaction H2O2 + AH2 = A + 2 H2O. It carries out the reaction 2 H2O2 = O2 + 2 H2O. Its function is as follows. Bifunctional enzyme with both catalase and broad-spectrum peroxidase activity. The polypeptide is Catalase-peroxidase (Cupriavidus necator (strain ATCC 17699 / DSM 428 / KCTC 22496 / NCIMB 10442 / H16 / Stanier 337) (Ralstonia eutropha)).